The sequence spans 476 residues: ATP synthase subunit beta (476 aa).

ATP is bound at residue 154–161 (GGAGVGKT).

This sequence belongs to the ATPase alpha/beta chains family. In terms of assembly, F-type ATPases have 2 components, CF(1) - the catalytic core - and CF(0) - the membrane proton channel. CF(1) has five subunits: alpha(3), beta(3), gamma(1), delta(1), epsilon(1). CF(0) has three main subunits: a(1), b(2) and c(9-12). The alpha and beta chains form an alternating ring which encloses part of the gamma chain. CF(1) is attached to CF(0) by a central stalk formed by the gamma and epsilon chains, while a peripheral stalk is formed by the delta and b chains.

Its subcellular location is the cell inner membrane. It carries out the reaction ATP + H2O + 4 H(+)(in) = ADP + phosphate + 5 H(+)(out). Functionally, produces ATP from ADP in the presence of a proton gradient across the membrane. The catalytic sites are hosted primarily by the beta subunits. The chain is ATP synthase subunit beta from Nitrobacter winogradskyi (strain ATCC 25391 / DSM 10237 / CIP 104748 / NCIMB 11846 / Nb-255).